A 960-amino-acid polypeptide reads, in one-letter code: MEAPPAAGVPTECTPAVAGAEVRCPGPTPLRLLEWKVAAGATVRIGSVLAVCETAASAQPAGPAPARAASGGCVRAARTERRLRSERAGVVRELCAQPGQVVAPGALLVRLEGCSHPVVMKGLCAECGQDLTQLQSKNGRQQVPLSTATVSMVHSVPELMVSSEQAEKLGREDQQRLHRNRKLVLMVDLDQTLIHTTEQHCPQMSNKGIFHFQLGRGEPMLHTRLRPHCKDFLEKIAKLYELHVFTFGSRLYAHTIAGFLDPEKKLFSHRILSRDECIDPFSKTGNLRNLFPCGDSMVCIIDDREDVWKFAPNLITVKKYVYFPGTGDVNAPPAARETQARRKVNHSSKGGDALEQALSVRDPEDGRPAPGVEHSNGLGKASRELNGGEAVPGVFPSKADEKEAWPLTRASPASSSSGHEPTEAPELPVSCEWDGRTTPGVQPTQGDAATQDLDFDLSSDSESSESSSRSEGQRAPAPQERTKAAPEHSGPQDTSGGRAAASPLGESGPSIHPHDKGSDLDTQEEGERDSLCGLGNGSVDRKEAETESQNSEQSGVTAGESLDQSVGEEEEEDTDDDDHLIHLEEILVRVHTDYYTKYDRYLNKELEEAPDIRKIVPELKSKVLADVAVIFSGLHPTNFPVEKTREHYHATALGAKVLTQLVLSPDAPDRATHLIAARAGTEKVRQAQECKHLHVVSPDWLWSCLERWDKVEEQLFPLIDDDTRTHRDNSPAVFPDRHSVLPTALFHPTPIHSKAHPGPEVRIYDSNTGKLIRMGPQGSAPAPSSAPLNHGEPSSFRAVQPHQQQMFGEELPESQDGEQPGPARRKRQPSMSEAMPLYTLCKEDLESMDKEVDDILGEGSDDSDIEKKKPEDQDNEQERAPKPRKPRAPGIRREQPVGLPSSGERSTPGMRGPRGHKRKLNEEDAASESSGESSNDDEEGSSSEADEMAAALEAELNDLM.

Methionine 1 carries the post-translational modification N-acetylmethionine. The 164-residue stretch at 178 to 341 (HRNRKLVLMV…PPAARETQAR (164 aa)) folds into the FCP1 homology domain. A disordered region spans residues 331 to 580 (APPAARETQA…EEDTDDDDHL (250 aa)). Polar residues predominate over residues 439-448 (PGVQPTQGDA). A compositionally biased stretch (acidic residues) spans 453–463 (LDFDLSSDSES). Position 530 is a phosphoserine (serine 530). Residues 547–556 (ESQNSEQSGV) show a composition bias toward polar residues. Residues 566–578 (VGEEEEEDTDDDD) are compositionally biased toward acidic residues. Positions 619 to 718 (LKSKVLADVA…DKVEEQLFPL (100 aa)) constitute a BRCT domain. Phosphoserine is present on residues serine 664 and serine 730. Lysine 770 carries the post-translational modification N6-acetyllysine. Disordered stretches follow at residues 770 to 834 (KLIR…MSEA) and 854 to 948 (DILG…ADEM). A phosphoserine mark is found at serine 830, serine 860, and serine 863. Residues 854-864 (DILGEGSDDSD) show a composition bias toward acidic residues. The span at 865-881 (IEKKKPEDQDNEQERAP) shows a compositional bias: basic and acidic residues. Over residues 934–947 (SNDDEEGSSSEADE) the composition is skewed to acidic residues.

As to quaternary structure, homodimer. Interacts with GTF2F1. Interacts with WDR77, SNRPB and SNRNP70. Post-translationally, phosphorylated. In the presence of TFIIF, the phosphorylated form has an increased CTD phosphatase activity. The phosphorylation is required for the physical interaction with GTF2F1.

It is found in the nucleus. It localises to the cytoplasm. The protein localises to the cytoskeleton. The protein resides in the microtubule organizing center. Its subcellular location is the centrosome. It is found in the spindle. It localises to the spindle pole. The protein localises to the midbody. It catalyses the reaction O-phospho-L-seryl-[protein] + H2O = L-seryl-[protein] + phosphate. The catalysed reaction is O-phospho-L-threonyl-[protein] + H2O = L-threonyl-[protein] + phosphate. In terms of biological role, processively dephosphorylates 'Ser-2' and 'Ser-5' of the heptad repeats YSPTSPS in the C-terminal domain of the largest RNA polymerase II subunit. This promotes the activity of RNA polymerase II. Plays a role in the exit from mitosis by dephosphorylating crucial mitotic substrates (USP44, CDC20 and WEE1) that are required for M-phase-promoting factor (MPF)/CDK1 inactivation. This chain is RNA polymerase II subunit A C-terminal domain phosphatase (Ctdp1), found in Mus musculus (Mouse).